The following is a 499-amino-acid chain: Glycerol kinase (499 aa).

ADP is bound at residue T12. ATP is bound by residues T12, T13, and S14. T12 provides a ligand contact to sn-glycerol 3-phosphate. R16 serves as a coordination point for ADP. The sn-glycerol 3-phosphate site is built by R82, E83, Y134, and D245. Glycerol contacts are provided by R82, E83, Y134, D245, and Q246. Residues T267 and G311 each contribute to the ADP site. ATP contacts are provided by T267, G311, Q315, and G412. Residues G412 and N416 each coordinate ADP.

The protein belongs to the FGGY kinase family.

The catalysed reaction is glycerol + ATP = sn-glycerol 3-phosphate + ADP + H(+). It participates in polyol metabolism; glycerol degradation via glycerol kinase pathway; sn-glycerol 3-phosphate from glycerol: step 1/1. With respect to regulation, inhibited by fructose 1,6-bisphosphate (FBP). In terms of biological role, key enzyme in the regulation of glycerol uptake and metabolism. Catalyzes the phosphorylation of glycerol to yield sn-glycerol 3-phosphate. This chain is Glycerol kinase, found in Acidiphilium cryptum (strain JF-5).